A 297-amino-acid chain; its full sequence is Tyrosine recombinase XerD (297 aa).

Residues M1–M86 enclose the Core-binding (CB) domain. One can recognise a Tyr recombinase domain in the interval G107–K291. Active-site residues include R147, K171, H243, R246, and H269. Y278 serves as the catalytic O-(3'-phospho-DNA)-tyrosine intermediate.

The protein belongs to the 'phage' integrase family. XerD subfamily. As to quaternary structure, forms a cyclic heterotetrameric complex composed of two molecules of XerC and two molecules of XerD.

It localises to the cytoplasm. In terms of biological role, site-specific tyrosine recombinase, which acts by catalyzing the cutting and rejoining of the recombining DNA molecules. The XerC-XerD complex is essential to convert dimers of the bacterial chromosome into monomers to permit their segregation at cell division. It also contributes to the segregational stability of plasmids. In Listeria monocytogenes serovar 1/2a (strain ATCC BAA-679 / EGD-e), this protein is Tyrosine recombinase XerD.